The primary structure comprises 406 residues: Arginine deiminase (406 aa).

Cysteine 396 acts as the Amidino-cysteine intermediate in catalysis.

Belongs to the arginine deiminase family.

The protein localises to the cytoplasm. The catalysed reaction is L-arginine + H2O = L-citrulline + NH4(+). Its pathway is amino-acid degradation; L-arginine degradation via ADI pathway; carbamoyl phosphate from L-arginine: step 1/2. The polypeptide is Arginine deiminase (Vibrio vulnificus (strain CMCP6)).